Consider the following 132-residue polypeptide: Small ribosomal subunit protein uS8 (132 aa).

Belongs to the universal ribosomal protein uS8 family. In terms of assembly, part of the 30S ribosomal subunit. Contacts proteins S5 and S12.

In terms of biological role, one of the primary rRNA binding proteins, it binds directly to 16S rRNA central domain where it helps coordinate assembly of the platform of the 30S subunit. The chain is Small ribosomal subunit protein uS8 from Streptomyces avermitilis (strain ATCC 31267 / DSM 46492 / JCM 5070 / NBRC 14893 / NCIMB 12804 / NRRL 8165 / MA-4680).